The following is a 294-amino-acid chain: tRNA dimethylallyltransferase (294 aa).

10-17 contacts ATP; sequence GPTAVGKT. 12 to 17 is a substrate binding site; the sequence is TAVGKT. Residues 35–38 are interaction with substrate tRNA; it reads DSQQ.

It belongs to the IPP transferase family. As to quaternary structure, monomer. Requires Mg(2+) as cofactor.

It carries out the reaction adenosine(37) in tRNA + dimethylallyl diphosphate = N(6)-dimethylallyladenosine(37) in tRNA + diphosphate. Its function is as follows. Catalyzes the transfer of a dimethylallyl group onto the adenine at position 37 in tRNAs that read codons beginning with uridine, leading to the formation of N6-(dimethylallyl)adenosine (i(6)A). The sequence is that of tRNA dimethylallyltransferase from Streptococcus pneumoniae serotype 4 (strain ATCC BAA-334 / TIGR4).